The chain runs to 440 residues: Chromosomal replication initiator protein DnaA (440 aa).

Residues 1-72 (MTELDSLWEA…KEFAQRELGR (72 aa)) form a domain I, interacts with DnaA modulators region. Residues 72 to 103 (RNIEPHYVLEGEFTYTNKKTEDDPTPSFEMDT) are domain II. The interval 104-320 (PLNPHYNFGT…GALTKVQAFA (217 aa)) is domain III, AAA+ region. 4 residues coordinate ATP: G148, G150, K151, and T152. The segment at 321 to 440 (NLSGERITPS…ITKLKAKLRS (120 aa)) is domain IV, binds dsDNA.

This sequence belongs to the DnaA family. Oligomerizes as a right-handed, spiral filament on DNA at oriC.

It is found in the cytoplasm. Plays an essential role in the initiation and regulation of chromosomal replication. ATP-DnaA binds to the origin of replication (oriC) to initiate formation of the DNA replication initiation complex once per cell cycle. Binds the DnaA box (a 9 base pair repeat at the origin) and separates the double-stranded (ds)DNA. Forms a right-handed helical filament on oriC DNA; dsDNA binds to the exterior of the filament while single-stranded (ss)DNA is stabiized in the filament's interior. The ATP-DnaA-oriC complex binds and stabilizes one strand of the AT-rich DNA unwinding element (DUE), permitting loading of DNA polymerase. After initiation quickly degrades to an ADP-DnaA complex that is not apt for DNA replication. Binds acidic phospholipids. This chain is Chromosomal replication initiator protein DnaA, found in Limosilactobacillus reuteri (strain DSM 20016) (Lactobacillus reuteri).